The primary structure comprises 482 residues: Transcription termination/antitermination protein NusA (482 aa).

The 65-residue stretch at 133 to 197 (NKVVIGYVQQ…NGIEVILSRT (65 aa)) folds into the S1 motif domain. Positions 300–446 (LHKALVVVSD…NDNDESMEKV (147 aa)) constitute a KH domain.

Belongs to the NusA family. In terms of assembly, monomer. Binds directly to the core enzyme of the DNA-dependent RNA polymerase and to nascent RNA.

Its subcellular location is the cytoplasm. Functionally, participates in both transcription termination and antitermination. This chain is Transcription termination/antitermination protein NusA, found in Borreliella burgdorferi (strain ATCC 35210 / DSM 4680 / CIP 102532 / B31) (Borrelia burgdorferi).